We begin with the raw amino-acid sequence, 194 residues long: Mitochondrial import inner membrane translocase subunit Tim22 (194 aa).

Cystine bridges form between cysteine 69-cysteine 141 and cysteine 160-cysteine 179. Helical transmembrane passes span 74–94 (VLACVGGFVLGGAFGIFTAGI), 123–143 (MSYAKNFAIVGAMFSCTECLV), and 170–190 (AGVKAGAIGCGGFAAFSAAID).

Belongs to the Tim17/Tim22/Tim23 family. In terms of assembly, component of the TIM22 complex, whose core is composed of TIMM22, associated with peripheral protein FXC1/TIMM10B and the 70 kDa heterohexamer. In most cases, the 70 kDa complex is composed of TIMM9 and TIMM10 (TIMM10A or TIMM10B). A small fraction of the 70 kDa complex is composed of TIMM8 (TIMM8A/DDP1 or TIMM8B/DDP2) and TIMM13. The TIM22 complex also contains AGK and TIMM29. Interacts directly with TIMM9, TIMM10A and FXC1/TIMM10B. Interacts (when oxidized) with TIMM29; interaction is direct. In terms of processing, disulfide bonds promote efficient assembly of the TIM22 complex.

It localises to the mitochondrion inner membrane. Essential core component of the TIM22 complex, a complex that mediates the import and insertion of multi-pass transmembrane proteins into the mitochondrial inner membrane. In the TIM22 complex, it constitutes the voltage-activated and signal-gated channel. Forms a twin-pore translocase that uses the membrane potential as external driving force in 2 voltage-dependent steps. This chain is Mitochondrial import inner membrane translocase subunit Tim22 (Timm22), found in Mus musculus (Mouse).